The following is a 156-amino-acid chain: ATP synthase subunit b (156 aa).

A helical membrane pass occupies residues 12 to 32 (VAFLIFVLFCMKYVWPPVITA).

This sequence belongs to the ATPase B chain family. As to quaternary structure, F-type ATPases have 2 components, F(1) - the catalytic core - and F(0) - the membrane proton channel. F(1) has five subunits: alpha(3), beta(3), gamma(1), delta(1), epsilon(1). F(0) has three main subunits: a(1), b(2) and c(10-14). The alpha and beta chains form an alternating ring which encloses part of the gamma chain. F(1) is attached to F(0) by a central stalk formed by the gamma and epsilon chains, while a peripheral stalk is formed by the delta and b chains.

It is found in the cell inner membrane. Functionally, f(1)F(0) ATP synthase produces ATP from ADP in the presence of a proton or sodium gradient. F-type ATPases consist of two structural domains, F(1) containing the extramembraneous catalytic core and F(0) containing the membrane proton channel, linked together by a central stalk and a peripheral stalk. During catalysis, ATP synthesis in the catalytic domain of F(1) is coupled via a rotary mechanism of the central stalk subunits to proton translocation. Its function is as follows. Component of the F(0) channel, it forms part of the peripheral stalk, linking F(1) to F(0). This Pseudomonas putida (strain ATCC 700007 / DSM 6899 / JCM 31910 / BCRC 17059 / LMG 24140 / F1) protein is ATP synthase subunit b.